The chain runs to 320 residues: Phosphate acyltransferase (320 aa).

It belongs to the PlsX family. In terms of assembly, homodimer. Probably interacts with PlsY.

The protein resides in the cytoplasm. It catalyses the reaction a fatty acyl-[ACP] + phosphate = an acyl phosphate + holo-[ACP]. It participates in lipid metabolism; phospholipid metabolism. Catalyzes the reversible formation of acyl-phosphate (acyl-PO(4)) from acyl-[acyl-carrier-protein] (acyl-ACP). This enzyme utilizes acyl-ACP as fatty acyl donor, but not acyl-CoA. The chain is Phosphate acyltransferase from Chlamydia pneumoniae (Chlamydophila pneumoniae).